The chain runs to 306 residues: tRNA dimethylallyltransferase (306 aa).

12–19 is a binding site for ATP; that stretch reads GPTGVGKS. A substrate-binding site is contributed by 14 to 19; sequence TGVGKS.

It belongs to the IPP transferase family. As to quaternary structure, monomer. It depends on Mg(2+) as a cofactor.

It catalyses the reaction adenosine(37) in tRNA + dimethylallyl diphosphate = N(6)-dimethylallyladenosine(37) in tRNA + diphosphate. Catalyzes the transfer of a dimethylallyl group onto the adenine at position 37 in tRNAs that read codons beginning with uridine, leading to the formation of N6-(dimethylallyl)adenosine (i(6)A). The protein is tRNA dimethylallyltransferase of Desulfatibacillum aliphaticivorans.